The primary structure comprises 370 residues: Protein STRICTOSIDINE SYNTHASE-LIKE 4 (370 aa).

The first 21 residues, 1 to 21 (MVLFFSTRFLFFSIFFPCLIS), serve as a signal peptide directing secretion. N-linked (GlcNAc...) asparagine glycosylation occurs at asparagine 101. A Phosphotyrosine modification is found at tyrosine 303.

This sequence belongs to the strictosidine synthase family.

It is found in the vacuole. This Arabidopsis thaliana (Mouse-ear cress) protein is Protein STRICTOSIDINE SYNTHASE-LIKE 4.